Reading from the N-terminus, the 424-residue chain is Protein shisa-9 (424 aa).

The signal sequence occupies residues 1–23 (MRRVLRLLLGCFLTELCARMCRA). Topologically, residues 24 to 149 (QERSGHGQLA…DPLHDPTKDK (126 aa)) are extracellular. Residues asparagine 45, asparagine 89, and asparagine 116 are each glycosylated (N-linked (GlcNAc...) asparagine). Residues 150–170 (TNLIVYIICGVVAVMVLVGIF) form a helical membrane-spanning segment. The Cytoplasmic segment spans residues 171-424 (TKLGLEKAHR…ITNSKTEVTV (254 aa)). 2 disordered regions span residues 333–373 (PRAF…TWDP) and 389–424 (LGIAESGSCDPLGTRTQHFPPTQPYFITNSKTEVTV). 2 stretches are compositionally biased toward polar residues: residues 362–373 (YNSTANFKTWDP) and 402–424 (TRTQHFPPTQPYFITNSKTEVTV).

It belongs to the shisa family. SHISA9 subfamily. Component of some AMPA receptors (ionotropic glutamate receptors) complex, at least composed of some AMPA receptor (GRIA1, GRIA2 and/or GRIA3), CACNG2 and SHISA9, as well as low level of DLG4. Brain-specific. Mainly expressed in neurons, including in hippocampus, cerebral cortex, striatum, thalamus, olfactory bulb and cerebellum. Expressed in most brain structures during embryonic and postnatal development.

The protein localises to the cell projection. It is found in the dendritic spine membrane. Its subcellular location is the synapse. Its function is as follows. Regulator of short-term neuronal synaptic plasticity in the dentate gyrus. Associates with AMPA receptors (ionotropic glutamate receptors) in synaptic spines and promotes AMPA receptor desensitization at excitatory synapses. This is Protein shisa-9 (Shisa9) from Mus musculus (Mouse).